The sequence spans 374 residues: 5-hydroxytryptamine receptor 1D (374 aa).

Asn-5, Asn-17, and Asn-21 each carry an N-linked (GlcNAc...) asparagine glycan. The next 3 membrane-spanning stretches (helical) occupy residues Ile-36 to Leu-61, Leu-73 to Ala-94, and Leu-107 to Leu-131. The cysteines at positions 108 and 185 are disulfide-linked. The serotonin site is built by Asp-115 and Cys-119. A DRY motif; important for ligand-induced conformation changes motif is present at residues Asp-132–Tyr-134. 4 helical membrane passes run Ala-152–Trp-173, Ile-192–Gly-215, Lys-298–Ile-323, and Ala-333–Phe-356. Ser-318 provides a ligand contact to serotonin. Positions Asn-349–Tyr-353 match the NPxxY motif; important for ligand-induced conformation changes and signaling motif.

It belongs to the G-protein coupled receptor 1 family. Homodimer. Heterodimer with HTR1B. As to expression, detected in dorsal raphe.

The protein resides in the cell membrane. G-protein coupled receptor for 5-hydroxytryptamine (serotonin). Also functions as a receptor for ergot alkaloid derivatives, various anxiolytic and antidepressant drugs and other psychoactive substances. Ligand binding causes a conformation change that triggers signaling via guanine nucleotide-binding proteins (G proteins) and modulates the activity of downstream effectors, such as adenylate cyclase. HTR1D is coupled to G(i)/G(o) G alpha proteins and mediates inhibitory neurotransmission by inhibiting adenylate cyclase activity. Regulates the release of 5-hydroxytryptamine in the brain, and thereby affects neural activity. May also play a role in regulating the release of other neurotransmitters. May play a role in vasoconstriction. This is 5-hydroxytryptamine receptor 1D (Htr1d) from Rattus norvegicus (Rat).